Here is a 261-residue protein sequence, read N- to C-terminus: Cell division protein B (261 aa).

Residues 213-261 are winged-helix-like fold; that stretch reads SEDMILNYIKTTGGFIDVDYIAKNFDVSKDEVFNVLRRLEEKGLIVLEG.

In terms of assembly, interacts with CdvA. Interacts with CdvC.

The protein localises to the cytoplasm. It localises to the nucleoid. Functionally, part of a cell division machinery. The CdvA, CdvB and CdvC proteins polymerize between segregating nucleoids and persist throughout cell division, forming a successively smaller structure during constriction. The chain is Cell division protein B from Sulfolobus acidocaldarius (strain ATCC 33909 / DSM 639 / JCM 8929 / NBRC 15157 / NCIMB 11770).